A 153-amino-acid chain; its full sequence is Small ribosomal subunit protein uS13 (153 aa).

The tract at residues 132 to 153 (VRGQRTRSHHRKGRTVGVIKKK) is disordered. Residues 135-153 (QRTRSHHRKGRTVGVIKKK) show a composition bias toward basic residues.

The protein belongs to the universal ribosomal protein uS13 family. In terms of assembly, part of the 30S ribosomal subunit. Forms a loose heterodimer with protein S19. Forms two bridges to the 50S subunit in the 70S ribosome.

Functionally, located at the top of the head of the 30S subunit, it contacts several helices of the 16S rRNA. In the 70S ribosome it contacts the 23S rRNA (bridge B1a) and protein L5 of the 50S subunit (bridge B1b), connecting the 2 subunits; these bridges are implicated in subunit movement. This Nanoarchaeum equitans (strain Kin4-M) protein is Small ribosomal subunit protein uS13.